A 321-amino-acid chain; its full sequence is D-alanine--D-alanine ligase (321 aa).

The ATP-grasp domain maps to 121–315; it reads RSWFLTNNIN…FTNLIEEIIK (195 aa). 147–199 contacts ATP; the sequence is PVKRPYVIKPLTQGSSIGVEVIFEEDDFNFADYNFPYGYQVIIEQYIKGRELQ. Residues E268, E282, and N284 each contribute to the Mg(2+) site.

It belongs to the D-alanine--D-alanine ligase family. The cofactor is Mg(2+). Requires Mn(2+) as cofactor.

The protein resides in the cytoplasm. The catalysed reaction is 2 D-alanine + ATP = D-alanyl-D-alanine + ADP + phosphate + H(+). It functions in the pathway cell wall biogenesis; peptidoglycan biosynthesis. Its function is as follows. Cell wall formation. This is D-alanine--D-alanine ligase from Rickettsia felis (strain ATCC VR-1525 / URRWXCal2) (Rickettsia azadi).